The sequence spans 617 residues: Erythritol-mannosyl-transferase 1 (617 aa).

Disordered regions lie at residues 365–396 and 567–617; these read RNPGSPGFTSPLNSPTAVATPKWDEKRPIDSR and RQRK…VTNP. Positions 371-381 are enriched in polar residues; sequence GFTSPLNSPTA. Over residues 386 to 396 the composition is skewed to basic and acidic residues; sequence KWDEKRPIDSR. A compositionally biased stretch (polar residues) spans 578 to 603; it reads TAKTSLSVDTTEVATPTFTDTETSLS.

It belongs to the UDP-glycosyltransferase family.

Its pathway is secondary metabolite biosynthesis. Glycosyltransferase; part of the gene cluster that mediates the biosynthesis of mannosylerythritol lipids (MELs), surface-active substances that enhance the availability of water-insoluble substrates. Depending on the number of acetyl groups, mannosylerythritol lipids can be differentiated into MEL A (fully acetylated), MEL B and MEL C (monoacetylated at R-6 and R-4, respectively), and the fully deacetylated MEL D. The first step in the pathway is the generation of mannosylerythritol by the glycosyltransferase EMT1 which catalyzes the transfer of GDP-mannose to the C-4 atom of meso-erythritol. This reaction has to be stereospecific, since only mannosyl-D-erythritol is generated. The produced disaccharide is subsequently acylated with fatty acids of various lengths by the acyltransferases MAC1 and MAC2 at positions C-2 and C-3, repectively. The existence of MEL derivatives which carry an acetyl group at C-2 implies that at least MAC1 also accepts acetyl-CoA as a donor. The final step of MEL biosynthesis is the acetylation of the fully acylated mannosylerythritol lipids catalyzed by the acetyl-CoA-dependent acetyltransferase MAT1. MAT1 displays a relaxed regioselectivity and is able to transfer acetylgroups to both positions C-4 and C-6 of the mannosyl moiety. This is Erythritol-mannosyl-transferase 1 from Pseudozyma antarctica (strain T-34) (Yeast).